We begin with the raw amino-acid sequence, 122 residues long: Ribonuclease P protein component (122 aa).

Belongs to the RnpA family. Consists of a catalytic RNA component (M1 or rnpB) and a protein subunit.

It catalyses the reaction Endonucleolytic cleavage of RNA, removing 5'-extranucleotides from tRNA precursor.. RNaseP catalyzes the removal of the 5'-leader sequence from pre-tRNA to produce the mature 5'-terminus. It can also cleave other RNA substrates such as 4.5S RNA. The protein component plays an auxiliary but essential role in vivo by binding to the 5'-leader sequence and broadening the substrate specificity of the ribozyme. The protein is Ribonuclease P protein component of Roseiflexus castenholzii (strain DSM 13941 / HLO8).